A 63-amino-acid polypeptide reads, in one-letter code: Bucandin (63 aa).

Cystine bridges form between cysteine 3/cysteine 24, cysteine 6/cysteine 11, cysteine 17/cysteine 39, cysteine 43/cysteine 55, and cysteine 56/cysteine 61.

In terms of tissue distribution, expressed by the venom gland.

It is found in the secreted. Its function is as follows. This toxin is described as enhancing presynaptic acetylcholine release, but neither experimental results, nor references to other sources are available. The polypeptide is Bucandin (Bungarus candidus (Malayan krait)).